The sequence spans 457 residues: Heme sensor protein HssS (457 aa).

The next 2 helical transmembrane spans lie at 9 to 29 (IAIY…VLTN) and 164 to 184 (TFLA…VIAS). One can recognise an HAMP domain in the interval 186 to 238 (YSIIRPVKKLKLATERLIDGDFETPIKQTRKDEIGTLQYHFNKMRESLGQVDQ). One can recognise a Histidine kinase domain in the interval 246–456 (NVSHEIKTPL…TFTITLPNNS (211 aa)). Histidine 249 bears the Phosphohistidine; by autocatalysis mark.

In terms of processing, autophosphorylated.

It is found in the cell membrane. It carries out the reaction ATP + protein L-histidine = ADP + protein N-phospho-L-histidine.. In terms of biological role, member of the two-component regulatory system HssS/HssR involved in intracellular heme homeostasis and tempering of staphylococcal virulence. HssS functions as a heme sensor histidine kinase which is autophosphorylated at a histidine residue and transfers its phosphate group to an aspartate residue of HssR. HssR/HssS activates the expression of hrtAB, an efflux pump, in response to extracellular heme, hemin, hemoglobin or blood. In Staphylococcus aureus (strain MSSA476), this protein is Heme sensor protein HssS (hssS).